We begin with the raw amino-acid sequence, 387 residues long: 1-deoxy-D-xylulose 5-phosphate reductoisomerase (387 aa).

NADPH contacts are provided by threonine 10, glycine 11, serine 12, valine 13, asparagine 38, and asparagine 119. 1-deoxy-D-xylulose 5-phosphate is bound at residue lysine 120. Glutamate 121 is an NADPH binding site. Position 145 (aspartate 145) interacts with Mn(2+). The 1-deoxy-D-xylulose 5-phosphate site is built by serine 146, glutamate 147, serine 170, and histidine 193. Glutamate 147 contributes to the Mn(2+) binding site. An NADPH-binding site is contributed by glycine 199. 1-deoxy-D-xylulose 5-phosphate contacts are provided by serine 206, asparagine 211, lysine 212, and glutamate 215. Glutamate 215 provides a ligand contact to Mn(2+).

The protein belongs to the DXR family. Requires Mg(2+) as cofactor. It depends on Mn(2+) as a cofactor.

It carries out the reaction 2-C-methyl-D-erythritol 4-phosphate + NADP(+) = 1-deoxy-D-xylulose 5-phosphate + NADPH + H(+). It participates in isoprenoid biosynthesis; isopentenyl diphosphate biosynthesis via DXP pathway; isopentenyl diphosphate from 1-deoxy-D-xylulose 5-phosphate: step 1/6. Functionally, catalyzes the NADPH-dependent rearrangement and reduction of 1-deoxy-D-xylulose-5-phosphate (DXP) to 2-C-methyl-D-erythritol 4-phosphate (MEP). The polypeptide is 1-deoxy-D-xylulose 5-phosphate reductoisomerase (Wolbachia sp. subsp. Drosophila simulans (strain wRi)).